The following is a 467-amino-acid chain: Light-independent protochlorophyllide reductase subunit N (467 aa).

Positions 23, 48, and 108 each coordinate [4Fe-4S] cluster.

This sequence belongs to the BchN/ChlN family. As to quaternary structure, protochlorophyllide reductase is composed of three subunits; ChlL, ChlN and ChlB. Forms a heterotetramer of two ChlB and two ChlN subunits. The cofactor is [4Fe-4S] cluster.

It carries out the reaction chlorophyllide a + oxidized 2[4Fe-4S]-[ferredoxin] + 2 ADP + 2 phosphate = protochlorophyllide a + reduced 2[4Fe-4S]-[ferredoxin] + 2 ATP + 2 H2O. The protein operates within porphyrin-containing compound metabolism; chlorophyll biosynthesis (light-independent). In terms of biological role, component of the dark-operative protochlorophyllide reductase (DPOR) that uses Mg-ATP and reduced ferredoxin to reduce ring D of protochlorophyllide (Pchlide) to form chlorophyllide a (Chlide). This reaction is light-independent. The NB-protein (ChlN-ChlB) is the catalytic component of the complex. This chain is Light-independent protochlorophyllide reductase subunit N, found in Trichormus variabilis (strain ATCC 29413 / PCC 7937) (Anabaena variabilis).